The sequence spans 54 residues: Large ribosomal subunit protein bL32 (54 aa).

Residues M1–I54 form a disordered region. Positions R7–R16 are enriched in basic residues. The segment covering A25–G34 has biased composition (polar residues).

This sequence belongs to the bacterial ribosomal protein bL32 family.

This chain is Large ribosomal subunit protein bL32, found in Tolumonas auensis (strain DSM 9187 / NBRC 110442 / TA 4).